A 339-amino-acid chain; its full sequence is Serine racemase (339 aa).

Position 13 (E13) interacts with Mg(2+). The ATP site is built by S31, S32, I33, K51, and T52. The active-site Proton acceptor is K56. N6-(pyridoxal phosphate)lysine is present on K56. Residue P69 coordinates Ca(2+). The residue at position 71 (T71) is a Phosphothreonine. Residue T81 coordinates Ca(2+). S84 functions as the Proton acceptor in the catalytic mechanism. Position 86 (N86) interacts with pyridoxal 5'-phosphate. Q89 lines the ATP pocket. S-nitrosocysteine is present on C113. Y121 contacts ATP. N154 is a binding site for pyridoxal 5'-phosphate. Residue D178 participates in Mg(2+) binding. Pyridoxal 5'-phosphate contacts are provided by G185, G186, G187, G188, and M189. The Mg(2+) site is built by E210, A214, D216, and N247. E210, A214, D216, and N247 together coordinate Ca(2+). E210, A214, and D216 together coordinate Mn(2+). K279 contributes to the ATP binding site. Pyridoxal 5'-phosphate is bound at residue S313. N316 serves as a coordination point for ATP.

This sequence belongs to the serine/threonine dehydratase family. Homodimer. It depends on Mg(2+) as a cofactor. Mn(2+) serves as cofactor. Ca(2+) is required as a cofactor. The cofactor is pyridoxal 5'-phosphate. Post-translationally, S-nitrosylated, leading to decrease the enzyme activity. Expressed in the hippocampus (at protein level). Expressed in the small intestine.

The enzyme catalyses L-serine = D-serine. It carries out the reaction D-serine = pyruvate + NH4(+). The catalysed reaction is L-serine = pyruvate + NH4(+). Its activity is regulated as follows. Allosterically activated by magnesium, and possibly also other divalent metal cations. Allosterically activated by ATP, ADP or GTP. Functionally, catalyzes the synthesis of D-serine from L-serine. D-serine is a key coagonist with glutamate at NMDA receptors. Has dehydratase activity towards both L-serine and D-serine. The sequence is that of Serine racemase (Srr) from Mus musculus (Mouse).